The following is a 288-amino-acid chain: Chemotaxis protein methyltransferase 2 (288 aa).

The CheR-type methyltransferase domain maps to 1-280 (MNEIVITDTD…TGYYKPHKGK (280 aa)). S-adenosyl-L-methionine-binding positions include Asn76, Thr78, Arg82, Glu119, Asp145, 200-201 (NL), and 219-220 (RN).

It catalyses the reaction L-glutamyl-[protein] + S-adenosyl-L-methionine = [protein]-L-glutamate 5-O-methyl ester + S-adenosyl-L-homocysteine. In terms of biological role, methylation of the membrane-bound methyl-accepting chemotaxis proteins (MCP) to form gamma-glutamyl methyl ester residues in MCP. This is Chemotaxis protein methyltransferase 2 (cheR2) from Vibrio cholerae serotype O1 (strain ATCC 39315 / El Tor Inaba N16961).